Reading from the N-terminus, the 184-residue chain is Peptide deformylase (184 aa).

Fe cation contacts are provided by cysteine 111 and histidine 154. The active site involves glutamate 155. Histidine 158 is a Fe cation binding site.

It belongs to the polypeptide deformylase family. Fe(2+) serves as cofactor.

The catalysed reaction is N-terminal N-formyl-L-methionyl-[peptide] + H2O = N-terminal L-methionyl-[peptide] + formate. Its function is as follows. Removes the formyl group from the N-terminal Met of newly synthesized proteins. Requires at least a dipeptide for an efficient rate of reaction. N-terminal L-methionine is a prerequisite for activity but the enzyme has broad specificity at other positions. In Lacticaseibacillus casei (strain BL23) (Lactobacillus casei), this protein is Peptide deformylase.